The sequence spans 419 residues: Probable glycosidase C21B10.07 (419 aa).

Disordered stretches follow at residues 1–20 (MGIP…AALS) and 29–67 (DPAR…NNEN). Positions 30–59 (PARKNESTNDVIDNHTDTEIDDHDNDHENL) are enriched in basic and acidic residues. The helical transmembrane segment at 88–108 (FIWILIFIVALICSVLIGVLG) threads the bilayer. The GH16 domain maps to 122–387 (PSYKAKTYSL…WAGSSVYSSA (266 aa)). Glutamate 237 (nucleophile) is an active-site residue. The active-site Proton donor is glutamate 242.

The protein belongs to the glycosyl hydrolase 16 family.

It is found in the membrane. This Schizosaccharomyces pombe (strain 972 / ATCC 24843) (Fission yeast) protein is Probable glycosidase C21B10.07.